A 223-amino-acid chain; its full sequence is Holliday junction branch migration complex subunit RuvA (223 aa).

Positions 1–64 are domain I; that stretch reads MIGRIAGVIL…EDLLQLFGFP (64 aa). Positions 65 to 143 are domain II; the sequence is TLLEKEWHRL…AVMALGGALT (79 aa). The interval 144–169 is flexible linker; the sequence is VDPGPLPEVELVEAAVPAPVPAKAAP. The domain III stretch occupies residues 170 to 223; that stretch reads SSAQATADALSALGNLGYAPSEAASAVAEAAAREPAAPTAALIRAALRLLAPKE.

The protein belongs to the RuvA family. Homotetramer. Forms an RuvA(8)-RuvB(12)-Holliday junction (HJ) complex. HJ DNA is sandwiched between 2 RuvA tetramers; dsDNA enters through RuvA and exits via RuvB. An RuvB hexamer assembles on each DNA strand where it exits the tetramer. Each RuvB hexamer is contacted by two RuvA subunits (via domain III) on 2 adjacent RuvB subunits; this complex drives branch migration. In the full resolvosome a probable DNA-RuvA(4)-RuvB(12)-RuvC(2) complex forms which resolves the HJ.

It localises to the cytoplasm. In terms of biological role, the RuvA-RuvB-RuvC complex processes Holliday junction (HJ) DNA during genetic recombination and DNA repair, while the RuvA-RuvB complex plays an important role in the rescue of blocked DNA replication forks via replication fork reversal (RFR). RuvA specifically binds to HJ cruciform DNA, conferring on it an open structure. The RuvB hexamer acts as an ATP-dependent pump, pulling dsDNA into and through the RuvAB complex. HJ branch migration allows RuvC to scan DNA until it finds its consensus sequence, where it cleaves and resolves the cruciform DNA. This chain is Holliday junction branch migration complex subunit RuvA, found in Paracoccus denitrificans (strain Pd 1222).